A 748-amino-acid polypeptide reads, in one-letter code: Glucans biosynthesis glucosyltransferase H (748 aa).

The next 7 helical transmembrane spans lie at 85-107 (LIVR…GYGM), 127-149 (FLVL…FVLL), 443-465 (GIGS…LISL), 494-516 (AWVF…LVLI), 529-551 (GRVL…CMMI), 587-606 (LAGP…SVSL), and 608-630 (LLLW…IMTS).

Belongs to the glycosyltransferase 2 family. OpgH subfamily.

The protein localises to the cell inner membrane. Its pathway is glycan metabolism; osmoregulated periplasmic glucan (OPG) biosynthesis. Involved in the biosynthesis of osmoregulated periplasmic glucans (OPGs). The sequence is that of Glucans biosynthesis glucosyltransferase H from Bradyrhizobium diazoefficiens (strain JCM 10833 / BCRC 13528 / IAM 13628 / NBRC 14792 / USDA 110).